Reading from the N-terminus, the 496-residue chain is Alanine aminotransferase 1 (496 aa).

An N-acetylalanine modification is found at A2. At T22 the chain carries Phosphothreonine. Residue K314 is modified to N6-(pyridoxal phosphate)lysine.

The protein belongs to the class-I pyridoxal-phosphate-dependent aminotransferase family. Alanine aminotransferase subfamily. Homodimer. The cofactor is pyridoxal 5'-phosphate.

It is found in the cytoplasm. It catalyses the reaction L-alanine + 2-oxoglutarate = pyruvate + L-glutamate. It participates in amino-acid degradation; L-alanine degradation via transaminase pathway; pyruvate from L-alanine: step 1/1. Its function is as follows. Catalyzes the reversible transamination between alanine and 2-oxoglutarate to form pyruvate and glutamate. Participates in cellular nitrogen metabolism and also in liver gluconeogenesis starting with precursors transported from skeletal muscles. In Bos taurus (Bovine), this protein is Alanine aminotransferase 1 (GPT).